Reading from the N-terminus, the 567-residue chain is Eukaryotic translation initiation factor 3 subunit D (567 aa).

Disordered regions lie at residues 12–34 (PVKSAWGPPETEQIGGDIPYAPF) and 122–160 (GQNVQRGGRGGRYGSSGGRGAGDTVVSRSSGAGGARGRR). Positions 128 to 142 (GGRGGRYGSSGGRGA) are enriched in gly residues. Positions 300-314 (PFDYLTVNENAYDSP) are RNA gate.

It belongs to the eIF-3 subunit D family. As to quaternary structure, component of the eukaryotic translation initiation factor 3 (eIF-3) complex. The eIF-3 complex appears to include tif32/eif3a, SPAC25G10.08/eif3b, tif33/eif3c, SPBC4C3.07/eif3f, tif35/eif3g and sum1/eif3i. This set of common subunits may also associate exclusively with either moe1/eif3d and int6/eif3e, or with SPAC821.05/eif3h and SPAC1751.03/eif3m. The eIF-3 complex may also include SPAC3A12.13c/eif3j.

It is found in the cytoplasm. MRNA cap-binding component of the eukaryotic translation initiation factor 3 (eIF-3) complex, which is involved in protein synthesis of a specialized repertoire of mRNAs and, together with other initiation factors, stimulates binding of mRNA and methionyl-tRNAi to the 40S ribosome. The eIF-3 complex specifically targets and initiates translation of a subset of mRNAs involved in cell proliferation. In the eIF-3 complex, eif3d specifically recognizes and binds the 7-methylguanosine cap of a subset of mRNAs. This chain is Eukaryotic translation initiation factor 3 subunit D (moe1), found in Schizosaccharomyces pombe (strain 972 / ATCC 24843) (Fission yeast).